Here is a 213-residue protein sequence, read N- to C-terminus: Large ribosomal subunit protein uL1 (213 aa).

The protein belongs to the universal ribosomal protein uL1 family. As to quaternary structure, part of the 50S ribosomal subunit.

Its function is as follows. Binds directly to 23S rRNA. Probably involved in E site tRNA release. Functionally, protein L1 is also a translational repressor protein, it controls the translation of its operon by binding to its mRNA. This Methanocella arvoryzae (strain DSM 22066 / NBRC 105507 / MRE50) protein is Large ribosomal subunit protein uL1.